The sequence spans 67 residues: Transcription elongation factor Spt4 (67 aa).

The Zn(2+) site is built by C7, C10, C19, and C22.

The protein belongs to the archaeal Spt4 family. In terms of assembly, heterodimer composed of Spt4 and Spt5. Interacts with RNA polymerase (RNAP). The complex interacts with FttA.

Its subcellular location is the chromosome. In terms of biological role, the Stp4-Spt5 complex stimulates transcription elongation on both naked DNA and histone-bound DNA (chromatin), facilitating transcription through the histone barrier. Neither protein functions alone. The complex also stimulates the transcription termination activity of FttA, neither protein alone stimulates FttA-dependent termination. This is Transcription elongation factor Spt4 from Thermococcus kodakarensis (strain ATCC BAA-918 / JCM 12380 / KOD1) (Pyrococcus kodakaraensis (strain KOD1)).